The chain runs to 532 residues: Drimenyl diphosphate synthase (532 aa).

4 residues coordinate (2E,6E)-farnesyl diphosphate: arginine 121, lysine 122, glutamine 152, and tryptophan 154. Glutamate 158 lines the Mg(2+) pocket. PFTB repeat units follow at residues 275–317 (PAAM…RVAG), 325–367 (IAAA…APNP), 428–469 (KRQA…SRDG), and 475–518 (LARA…CVLL). The Proton donor role is filled by aspartate 304. Arginine 502 is a (2E,6E)-farnesyl diphosphate binding site.

This sequence belongs to the terpene cyclase/mutase family. Mg(2+) serves as cofactor. It depends on Ni(2+) as a cofactor. Co(2+) is required as a cofactor.

It catalyses the reaction (2E,6E)-farnesyl diphosphate = (5S,9S,10S)-drim-7-en-11-yl diphosphate. Catalyzes the cyclization of farnesyl diphosphate (FPP) to drimenyl diphosphate. The sequence is that of Drimenyl diphosphate synthase from Streptantibioticus cattleyicolor (strain ATCC 35852 / DSM 46488 / JCM 4925 / NBRC 14057 / NRRL 8057) (Streptomyces cattleya).